A 360-amino-acid polypeptide reads, in one-letter code: MRNISDLPNDLLVKILSLIPIKVAASTSLLSKRWGSVWKLIPTLDYDGTYSAAALEFFGKFHTLVALRFMKLTIEDVHSTTCFRSVKNLSLLDVKFSSDKTVERLLSCFPILETLVVHRWGADNVKTFAICVPSLQSLNIRYTVGGYHNPKTDHGFVINAPSLKHLDIVDHFSGFCSLVNMPEQLDAEIHLRHIDSEKLLESLTSSKKLSLCLKPQTGSYPGGDFDQLVCLELCVMCSLDWLNLILRRSPKLRSLKLYQSRERNWSCRNSKHVRTKWEQPNSVPECLLVSLETVKWILYKGTQEEKDVVKYLLKNGNFIKTMSIRFSSVVTLEERIHIPMEFEFMGRINSSRCQLSFSKL.

Positions 1-53 (MRNISDLPNDLLVKILSLIPIKVAASTSLLSKRWGSVWKLIPTLDYDGTYSAA) constitute an F-box domain. Kelch repeat units lie at residues 140-186 (IRYT…EQLD) and 235-285 (VMCS…SVPE). One can recognise an FBD domain in the interval 276–326 (KWEQPNSVPECLLVSLETVKWILYKGTQEEKDVVKYLLKNGNFIKTMSIRF).

This Arabidopsis thaliana (Mouse-ear cress) protein is Putative FBD-associated F-box protein At5g56430.